Here is a 173-residue protein sequence, read N- to C-terminus: Ribonuclease H (173 aa).

The disordered stretch occupies residues 1 to 20 (MKATSKAKTHPPGATAAKDP). The region spanning 20 to 162 (PQKQVIIYTD…CDVLSKEAAG (143 aa)) is the RNase H type-1 domain. Residues D29, E67, D89, and D154 each contribute to the Mg(2+) site.

This sequence belongs to the RNase H family. In terms of assembly, monomer. Mg(2+) is required as a cofactor.

Its subcellular location is the cytoplasm. The catalysed reaction is Endonucleolytic cleavage to 5'-phosphomonoester.. Its function is as follows. Endonuclease that specifically degrades the RNA of RNA-DNA hybrids. In Syntrophus aciditrophicus (strain SB), this protein is Ribonuclease H.